A 411-amino-acid chain; its full sequence is Arginine deiminase (411 aa).

Residue Cys401 is the Amidino-cysteine intermediate of the active site.

Belongs to the arginine deiminase family.

The protein resides in the cytoplasm. The catalysed reaction is L-arginine + H2O = L-citrulline + NH4(+). The protein operates within amino-acid degradation; L-arginine degradation via ADI pathway; carbamoyl phosphate from L-arginine: step 1/2. This Staphylococcus aureus (strain bovine RF122 / ET3-1) protein is Arginine deiminase.